The primary structure comprises 485 residues: Glycogen synthase (485 aa).

Lys-15 is an ADP-alpha-D-glucose binding site.

It belongs to the glycosyltransferase 1 family. Bacterial/plant glycogen synthase subfamily.

It carries out the reaction [(1-&gt;4)-alpha-D-glucosyl](n) + ADP-alpha-D-glucose = [(1-&gt;4)-alpha-D-glucosyl](n+1) + ADP + H(+). It participates in glycan biosynthesis; glycogen biosynthesis. Functionally, synthesizes alpha-1,4-glucan chains using ADP-glucose. This is Glycogen synthase from Francisella philomiragia subsp. philomiragia (strain ATCC 25017 / CCUG 19701 / FSC 153 / O#319-036).